A 718-amino-acid chain; its full sequence is Effector protein hopM1 (718 aa).

A compositionally biased stretch (gly residues) spans 1–10 (MIGTRVGGSG). Disordered regions lie at residues 1-63 (MIGT…ARLP) and 683-718 (GVSSLRDAHKPAETSSPTADDAAAVELTAMEEGRRR). The span at 11-22 (STEIVQANQPQP) shows a compositional bias: polar residues. The segment covering 44 to 60 (ASQSAAQAPESSAAGAA) has biased composition (low complexity).

Interacts with the chaperone ShcM.

The protein resides in the secreted. It is found in the host membrane. In terms of biological role, involved in the suppression of basal resistance and promotion of disease symptoms in plants. May be involved in the inhibition of a host vesicle trafficking pathway. The protein is Effector protein hopM1 (hopM1) of Pseudomonas syringae pv. syringae (strain B728a).